Reading from the N-terminus, the 26-residue chain is FLWGALIKGAGKLISRVVGSLKKKKQ.

Belongs to the non-disulfide-bridged peptide (NDBP) superfamily. Medium-length antimicrobial peptide (group 3) family. Ponericin-W subfamily. As to expression, expressed by the venom gland.

The protein resides in the secreted. It is found in the target cell membrane. Has a broad spectrum of activity against both Gram-positive and Gram-negative bacteria and S.cerevisiae. Has insecticidal and hemolytic activities. May act by disrupting the integrity of the bacterial cell membrane. The polypeptide is U1-poneritoxin-Ni1b (Neoponera inversa (Ant)).